A 429-amino-acid polypeptide reads, in one-letter code: MKTFEKSSAAFNRAKPLMPGGVNSPVRAFKSVNMDPVFMERGKGANIYDIDGNEYIDYVLSWGPLILGHADDQVVEKLKETTEKGTSFGAPSELETKLAELVIERVPSIEVVRMVNSGTEATMSALRLARGYTGRNKILKFEGCYHGHGDSLLIKAGSGVATLGLPDSPGVPETVAQNTLTVPYNDLESVRYAFEQFGDDLAGVIVEPVAGNMGVVPPEPGFLEELRRLTEENGTLLIFDEVMTGFRVGYHCAQGAFGITPDLTCLGKVIGGGLPVGAYGGKREIMEQIAPSGPIYQAGTLSGNPLAMTAGYETLVQLTEANYEYFDRLGDRLAEGLSAVAKEYDIPHYTSRAGSMVGFFFTDKKVKNFADASSSDLEFFAKYFKEMLHLGVSLPPSQFEGMFLSTKHTEADIDFTVDAARQAFKRLKK.

Position 268 is an N6-(pyridoxal phosphate)lysine (Lys-268).

Belongs to the class-III pyridoxal-phosphate-dependent aminotransferase family. HemL subfamily. Homodimer. It depends on pyridoxal 5'-phosphate as a cofactor.

Its subcellular location is the cytoplasm. It catalyses the reaction (S)-4-amino-5-oxopentanoate = 5-aminolevulinate. The protein operates within porphyrin-containing compound metabolism; protoporphyrin-IX biosynthesis; 5-aminolevulinate from L-glutamyl-tRNA(Glu): step 2/2. The polypeptide is Glutamate-1-semialdehyde 2,1-aminomutase 2 (Halalkalibacterium halodurans (strain ATCC BAA-125 / DSM 18197 / FERM 7344 / JCM 9153 / C-125) (Bacillus halodurans)).